A 445-amino-acid chain; its full sequence is MLKKQSAGLVLWGAILFVAWNALLLLFFWTRPAPGRPPSVSALDGDPASLTREVIRLAQDAEVELERQRGLLQQIGDALSSQRGRVPTAAPPAQPRVPVTPAPAVIPILVIACDRSTVRRCLDKLLHYRPSAELFPIIVSQDCGHEETAQAIASYGSAVTHIRQPDLSSIAVPPDHRKFQGYYKIARHYRWALGQVFRQFRFPAAVVVEDDLEVAPDFFEYFRATYPLLKADPSLWCVSAWNDNGKEQMVDASRPELLYRTDFFPGLGWLLLAELWAELEPKWPKAFWDDWMRRPEQRQGRACIRPEISRTMTFGRKGVSHGQFFDQHLKFIKLNQQFVHFTQLDLSYLQREAYDRDFLARVYGAPQLQVEKVRTNDRKELGEVRVQYTGRDSFKAFAKALGVMDDLKSGVPRAGYRGIVTFQFRGRRVHLAPPLTWEGYDPSWN.

Residues Met-1 to Ser-6 lie on the Cytoplasmic side of the membrane. The helical; Signal-anchor for type II membrane protein transmembrane segment at Ala-7–Trp-29 threads the bilayer. Residues Thr-30–Asn-445 lie on the Lumenal side of the membrane. Cys-113 and Cys-143 are disulfide-bonded. The substrate site is built by Arg-115, Asp-142, His-188, and Asp-210. Asp-211 serves as a coordination point for Mn(2+). A disulfide bond links Cys-237 and Cys-303. Asp-289 acts as the Proton acceptor in catalysis. Residue Ser-320 coordinates substrate.

It belongs to the glycosyltransferase 13 family. As to quaternary structure, interacts with MGAT4D. Interacts with BRI3 (isoforms 1 and 2); the interaction with isoform 2 is weaker than with isoform 1. Mn(2+) is required as a cofactor.

It localises to the golgi apparatus membrane. Its subcellular location is the cytoplasm. It is found in the perinuclear region. It carries out the reaction N(4)-(alpha-D-Man-(1-&gt;3)-[alpha-D-Man-(1-&gt;3)-[alpha-D-Man-(1-&gt;6)]-alpha-D-Man-(1-&gt;6)]-beta-D-Man-(1-&gt;4)-beta-D-GlcNAc-(1-&gt;4)-beta-D-GlcNAc)-L-asparaginyl-[protein] (N-glucan mannose isomer 5A1,2) + UDP-N-acetyl-alpha-D-glucosamine = N(4)-{beta-D-GlcNAc-(1-&gt;2)-alpha-D-Man-(1-&gt;3)-[alpha-D-Man-(1-&gt;3)-[alpha-D-Man-(1-&gt;6)]-alpha-D-Man-(1-&gt;6)]-beta-D-Man-(1-&gt;4)-beta-D-GlcNAc-(1-&gt;4)-beta-D-GlcNAc}-L-asparaginyl-[protein] + UDP + H(+). It functions in the pathway protein modification; protein glycosylation. Its function is as follows. Initiates complex N-linked carbohydrate formation. Essential for the conversion of high-mannose to hybrid and complex N-glycans. The chain is Alpha-1,3-mannosyl-glycoprotein 2-beta-N-acetylglucosaminyltransferase (MGAT1) from Homo sapiens (Human).